Consider the following 110-residue polypeptide: Large ribosomal subunit protein mL60 (110 aa).

Belongs to the mitochondrion-specific ribosomal protein mL60 family. In terms of assembly, component of the mitochondrial large ribosomal subunit (mt-LSU). Mature N.crassa 74S mitochondrial ribosomes consist of a small (37S) and a large (54S) subunit. The 37S small subunit contains a 16S ribosomal RNA (16S mt-rRNA) and 32 different proteins. The 54S large subunit contains a 23S rRNA (23S mt-rRNA) and 42 different proteins.

It is found in the mitochondrion. Its function is as follows. Component of the mitochondrial ribosome (mitoribosome), a dedicated translation machinery responsible for the synthesis of mitochondrial genome-encoded proteins, including at least some of the essential transmembrane subunits of the mitochondrial respiratory chain. The mitoribosomes are attached to the mitochondrial inner membrane and translation products are cotranslationally integrated into the membrane. The polypeptide is Large ribosomal subunit protein mL60 (mrpl31) (Neurospora crassa (strain ATCC 24698 / 74-OR23-1A / CBS 708.71 / DSM 1257 / FGSC 987)).